The following is a 127-amino-acid chain: Fluoride-specific ion channel FluC (127 aa).

The next 4 helical transmembrane spans lie at 4–24 (LLCAVFIGGGTGSVLRWWLGM), 35–55 (IGTLTANLVGAFVIGAGLAWF), 71–91 (TGFCGGLTTFSTFSAEVVFLL), and 101–121 (LNVMVNLLGSFAMTAVAFWLF). Na(+)-binding residues include Gly75 and Thr78.

It belongs to the fluoride channel Fluc/FEX (TC 1.A.43) family.

Its subcellular location is the cell inner membrane. It catalyses the reaction fluoride(in) = fluoride(out). Its activity is regulated as follows. Na(+) is not transported, but it plays an essential structural role and its presence is essential for fluoride channel function. Its function is as follows. Fluoride-specific ion channel. Important for reducing fluoride concentration in the cell, thus reducing its toxicity. This is Fluoride-specific ion channel FluC from Klebsiella pneumoniae (strain 342).